A 186-amino-acid polypeptide reads, in one-letter code: Lipid A acyltransferase PagP (186 aa).

Positions 1-25 (MNVSKYVAIFSFVFIQLISVGKVFA) are cleaved as a signal peptide. Catalysis depends on residues histidine 58, aspartate 101, and serine 102.

It belongs to the lipid A palmitoyltransferase family. Homodimer.

Its subcellular location is the cell outer membrane. The enzyme catalyses a lipid A + a 1,2-diacyl-sn-glycero-3-phosphocholine = a hepta-acyl lipid A + a 2-acyl-sn-glycero-3-phosphocholine. It catalyses the reaction a lipid IVA + a 1,2-diacyl-sn-glycero-3-phosphocholine = a lipid IVB + a 2-acyl-sn-glycero-3-phosphocholine. The catalysed reaction is a lipid IIA + a 1,2-diacyl-sn-glycero-3-phosphocholine = a lipid IIB + a 2-acyl-sn-glycero-3-phosphocholine. In terms of biological role, transfers a fatty acid residue from the sn-1 position of a phospholipid to the N-linked hydroxyfatty acid chain on the proximal unit of lipid A or its precursors. The polypeptide is Lipid A acyltransferase PagP (Shigella boydii serotype 4 (strain Sb227)).